The primary structure comprises 676 residues: Nicastrin (676 aa).

A signal peptide spans 1 to 28 (MAMGLIRLLSIAFTLVLLSILPLHLSLA). Topologically, residues 29–644 (DEITSIESVP…VYTVQHSAYD (616 aa)) are extracellular. Asparagine 58, asparagine 336, asparagine 371, asparagine 444, asparagine 480, asparagine 555, and asparagine 611 each carry an N-linked (GlcNAc...) asparagine glycan. Residues 645–665 (NAVLVAGITVTTLAYIGILAA) form a helical membrane-spanning segment. Residues 666–676 (KSIITKALKQD) lie on the Cytoplasmic side of the membrane.

The protein belongs to the nicastrin family. As to quaternary structure, probable component of the gamma-secretase complex, a complex composed of a presenilin homodimer, nicastrin, APH1 and PEN2.

The protein resides in the membrane. Functionally, probable subunit of the gamma-secretase complex, an endoprotease complex that catalyzes the intramembrane cleavage of integral membrane proteins such as Notch. In Arabidopsis thaliana (Mouse-ear cress), this protein is Nicastrin.